We begin with the raw amino-acid sequence, 420 residues long: Serine hydroxymethyltransferase (420 aa).

(6S)-5,6,7,8-tetrahydrofolate is bound by residues Leu121 and 125–127 (GHL). Lys229 is modified (N6-(pyridoxal phosphate)lysine).

The protein belongs to the SHMT family. Homodimer. It depends on pyridoxal 5'-phosphate as a cofactor.

It localises to the cytoplasm. The catalysed reaction is (6R)-5,10-methylene-5,6,7,8-tetrahydrofolate + glycine + H2O = (6S)-5,6,7,8-tetrahydrofolate + L-serine. It participates in one-carbon metabolism; tetrahydrofolate interconversion. The protein operates within amino-acid biosynthesis; glycine biosynthesis; glycine from L-serine: step 1/1. Its function is as follows. Catalyzes the reversible interconversion of serine and glycine with tetrahydrofolate (THF) serving as the one-carbon carrier. This reaction serves as the major source of one-carbon groups required for the biosynthesis of purines, thymidylate, methionine, and other important biomolecules. Also exhibits THF-independent aldolase activity toward beta-hydroxyamino acids, producing glycine and aldehydes, via a retro-aldol mechanism. This Streptomyces coelicolor (strain ATCC BAA-471 / A3(2) / M145) protein is Serine hydroxymethyltransferase.